Consider the following 358-residue polypeptide: Pyruvate dehydrogenase E1 component subunit alpha (358 aa).

As to quaternary structure, heterodimer of an alpha and a beta chain. It depends on thiamine diphosphate as a cofactor.

The catalysed reaction is N(6)-[(R)-lipoyl]-L-lysyl-[protein] + pyruvate + H(+) = N(6)-[(R)-S(8)-acetyldihydrolipoyl]-L-lysyl-[protein] + CO2. The pyruvate dehydrogenase complex catalyzes the overall conversion of pyruvate to acetyl-CoA and CO(2). It contains multiple copies of three enzymatic components: pyruvate dehydrogenase (E1), dihydrolipoamide acetyltransferase (E2) and lipoamide dehydrogenase (E3). The chain is Pyruvate dehydrogenase E1 component subunit alpha (pdhA) from Mycoplasma genitalium (strain ATCC 33530 / DSM 19775 / NCTC 10195 / G37) (Mycoplasmoides genitalium).